The sequence spans 294 residues: Syntaxin-19 (294 aa).

The region spanning 209–271 (LSEIEQRHKE…NNTKEKFGLA (63 aa)) is the t-SNARE coiled-coil homology domain.

This sequence belongs to the syntaxin family. Interacts with EGFR.

The protein localises to the cell membrane. Its subcellular location is the cytoplasm. Its function is as follows. Plays a role in endosomal trafficking of the epidermal growth factor receptor (EGFR). The protein is Syntaxin-19 (STX19) of Pongo abelii (Sumatran orangutan).